Here is a 120-residue protein sequence, read N- to C-terminus: Large ribosomal subunit protein uL18 (120 aa).

The protein belongs to the universal ribosomal protein uL18 family. In terms of assembly, part of the 50S ribosomal subunit; part of the 5S rRNA/L5/L18/L25 subcomplex. Contacts the 5S and 23S rRNAs.

This is one of the proteins that bind and probably mediate the attachment of the 5S RNA into the large ribosomal subunit, where it forms part of the central protuberance. The polypeptide is Large ribosomal subunit protein uL18 (Staphylococcus saprophyticus subsp. saprophyticus (strain ATCC 15305 / DSM 20229 / NCIMB 8711 / NCTC 7292 / S-41)).